Here is a 112-residue protein sequence, read N- to C-terminus: Divalent-cation tolerance protein CutA (112 aa).

Positions 16, 83, and 84 each coordinate Cu cation.

This sequence belongs to the CutA family. Homotrimer. Cu cation serves as cofactor.

The protein localises to the cytoplasm. In terms of biological role, involved in resistance toward heavy metals. This chain is Divalent-cation tolerance protein CutA, found in Shigella boydii serotype 18 (strain CDC 3083-94 / BS512).